Reading from the N-terminus, the 231-residue chain is Large ribosomal subunit protein uL1 (231 aa).

This sequence belongs to the universal ribosomal protein uL1 family. As to quaternary structure, part of the 50S ribosomal subunit.

In terms of biological role, binds directly to 23S rRNA. The L1 stalk is quite mobile in the ribosome, and is involved in E site tRNA release. Functionally, protein L1 is also a translational repressor protein, it controls the translation of the L11 operon by binding to its mRNA. In Pseudomonas fluorescens (strain Pf0-1), this protein is Large ribosomal subunit protein uL1.